Consider the following 241-residue polypeptide: DNA repair protein RecO (241 aa).

This sequence belongs to the RecO family.

In terms of biological role, involved in DNA repair and RecF pathway recombination. This chain is DNA repair protein RecO, found in Roseobacter denitrificans (strain ATCC 33942 / OCh 114) (Erythrobacter sp. (strain OCh 114)).